Consider the following 203-residue polypeptide: Holliday junction branch migration complex subunit RuvA (203 aa).

The domain I stretch occupies residues 1–63; it reads MIDYLRGTLT…EDVIRLYGFR (63 aa). The domain II stretch occupies residues 64–142; the sequence is TKEKRSLFEK…ELHPGLFSQK (79 aa). A flexible linker region spans residues 143 to 152; the sequence is EEQPKPHEKN. The interval 153–203 is domain III; that stretch reads DGNQALDEAMEALKALGYVEKELKKVKPKLEQETLTTDAYIKKALQLMLNR.

The protein belongs to the RuvA family. As to quaternary structure, homotetramer. Forms an RuvA(8)-RuvB(12)-Holliday junction (HJ) complex. HJ DNA is sandwiched between 2 RuvA tetramers; dsDNA enters through RuvA and exits via RuvB. An RuvB hexamer assembles on each DNA strand where it exits the tetramer. Each RuvB hexamer is contacted by two RuvA subunits (via domain III) on 2 adjacent RuvB subunits; this complex drives branch migration. In the full resolvosome a probable DNA-RuvA(4)-RuvB(12)-RuvC(2) complex forms which resolves the HJ.

It localises to the cytoplasm. Its function is as follows. The RuvA-RuvB-RuvC complex processes Holliday junction (HJ) DNA during genetic recombination and DNA repair, while the RuvA-RuvB complex plays an important role in the rescue of blocked DNA replication forks via replication fork reversal (RFR). RuvA specifically binds to HJ cruciform DNA, conferring on it an open structure. The RuvB hexamer acts as an ATP-dependent pump, pulling dsDNA into and through the RuvAB complex. HJ branch migration allows RuvC to scan DNA until it finds its consensus sequence, where it cleaves and resolves the cruciform DNA. This is Holliday junction branch migration complex subunit RuvA from Halalkalibacterium halodurans (strain ATCC BAA-125 / DSM 18197 / FERM 7344 / JCM 9153 / C-125) (Bacillus halodurans).